The primary structure comprises 246 residues: Transcription factor A, mitochondrial (246 aa).

A mitochondrion-targeting transit peptide spans 1–42; it reads MALLRGVWGVLSALGKSGADLCAVCGSRLRSPFSFAYVPRWF. Residues 50-118 constitute a DNA-binding region (HMG box 1); sequence PKKPMTSYVR…VYKEEVNRIQ (69 aa). 2 positions are modified to phosphoserine; by PKA: serine 56 and serine 61. The residue at position 122 (threonine 122) is a Phosphothreonine. The HMG box 2 DNA-binding region spans 155 to 219; the sequence is PKRPRSAYNI…RYYNEMKSWE (65 aa). Residue serine 160 is modified to Phosphoserine; by PKA. A phosphoserine mark is found at serine 193 and serine 195.

In terms of assembly, monomer; binds DNA as a monomer. Homodimer. Component of the mitochondrial transcription initiation complex, composed at least of TFB2M, TFAM and POLRMT. In this complex TFAM recruits POLRMT to the promoter whereas TFB2M induces structural changes in POLRMT to enable promoter opening and trapping of the DNA non-template strand. Upon metabolic stress, forms a complex composed of FOXO3, SIRT3, TFAM and POLRMT. Interacts with TFB1M and TFB2M. Interacts with CLPX; this enhances DNA-binding. Post-translationally, phosphorylation by PKA within the HMG box 1 impairs DNA binding and promotes degradation by the AAA+ Lon protease.

The protein resides in the mitochondrion. It localises to the mitochondrion matrix. The protein localises to the mitochondrion nucleoid. Functionally, binds to the mitochondrial light strand promoter and functions in mitochondrial transcription regulation. Component of the mitochondrial transcription initiation complex, composed at least of TFB2M, TFAM and POLRMT that is required for basal transcription of mitochondrial DNA. In this complex, TFAM recruits POLRMT to a specific promoter whereas TFB2M induces structural changes in POLRMT to enable promoter opening and trapping of the DNA non-template strand. Required for accurate and efficient promoter recognition by the mitochondrial RNA polymerase. Promotes transcription initiation from the HSP1 and the light strand promoter by binding immediately upstream of transcriptional start sites. Is able to unwind DNA. Bends the mitochondrial light strand promoter DNA into a U-turn shape via its HMG boxes. Required for maintenance of normal levels of mitochondrial DNA. May play a role in organizing and compacting mitochondrial DNA. This Sus scrofa (Pig) protein is Transcription factor A, mitochondrial.